The following is a 268-amino-acid chain: Phosphate import ATP-binding protein PstB 2 (268 aa).

Positions 19–263 (YKVRNMAFFY…PKDKRTEDYI (245 aa)) constitute an ABC transporter domain. 51–58 (GPSGCGKS) provides a ligand contact to ATP.

Belongs to the ABC transporter superfamily. Phosphate importer (TC 3.A.1.7) family. As to quaternary structure, the complex is composed of two ATP-binding proteins (PstB), two transmembrane proteins (PstC and PstA) and a solute-binding protein (PstS).

The protein resides in the cell inner membrane. It carries out the reaction phosphate(out) + ATP + H2O = ADP + 2 phosphate(in) + H(+). Its function is as follows. Part of the ABC transporter complex PstSACB involved in phosphate import. Responsible for energy coupling to the transport system. The protein is Phosphate import ATP-binding protein PstB 2 of Gloeobacter violaceus (strain ATCC 29082 / PCC 7421).